We begin with the raw amino-acid sequence, 55 residues long: Large ribosomal subunit protein bL33 (55 aa).

This sequence belongs to the bacterial ribosomal protein bL33 family.

The polypeptide is Large ribosomal subunit protein bL33 (Ruegeria pomeroyi (strain ATCC 700808 / DSM 15171 / DSS-3) (Silicibacter pomeroyi)).